The chain runs to 249 residues: MAEQASFIDRLSARFAGAKVIVVEPRGEVTLEVPAAEWHATALALRDEFGFEQAVDLCGVDYLGYGSDEWDTADVSSQGFSRGVEGKAQGRFAWGEFPTEENGADGARPQHMPTQRFAVVAQLRSYQHNLMMHLRCFAPDEALPVVSSLTGIWPGLNWFEREAFDLYGVIFEGHPDLRRILTDYGFVGHPFRKDFPLIGNVEVRYDEEKKRVIYEPVTSVEPRVGVPRVIRDDARLQTAEGERAQEAVK.

The protein belongs to the complex I 30 kDa subunit family. In terms of assembly, NDH-1 is composed of 14 different subunits. Subunits NuoB, C, D, E, F, and G constitute the peripheral sector of the complex.

Its subcellular location is the cell inner membrane. It carries out the reaction a quinone + NADH + 5 H(+)(in) = a quinol + NAD(+) + 4 H(+)(out). In terms of biological role, NDH-1 shuttles electrons from NADH, via FMN and iron-sulfur (Fe-S) centers, to quinones in the respiratory chain. The immediate electron acceptor for the enzyme in this species is believed to be ubiquinone. Couples the redox reaction to proton translocation (for every two electrons transferred, four hydrogen ions are translocated across the cytoplasmic membrane), and thus conserves the redox energy in a proton gradient. The protein is NADH-quinone oxidoreductase subunit C of Stenotrophomonas maltophilia (strain R551-3).